The sequence spans 1023 residues: Sodium/potassium-transporting ATPase subunit alpha-1 (1023 aa).

The propeptide occupies Met1–Val5. The span at Met1–Glu11 shows a compositional bias: basic and acidic residues. The tract at residues Met1–Glu38 is disordered. Residues Gly6–Pro87 lie on the Cytoplasmic side of the membrane. Residue Lys9 is modified to N6-acetyllysine. Tyr10 is modified (phosphotyrosine). Ser16 carries the post-translational modification Phosphoserine; by PKC. Lys21 carries the post-translational modification N6-acetyllysine. Over residues Lys28–Glu38 the composition is skewed to basic and acidic residues. Ser40 and Ser47 each carry phosphoserine. The tract at residues Pro82–Pro84 is phosphoinositide-3 kinase binding. The helical transmembrane segment at Glu88 to Ala108 threads the bilayer. The Extracellular segment spans residues Ile109–Tyr131. The helical transmembrane segment at Leu132 to Ala152 threads the bilayer. At Lys153–Ile288 the chain is on the cytoplasmic side. Residues Ser216–Asn235 form a disordered region. Ser228 carries the phosphoserine modification. Tyr260 carries the phosphotyrosine modification. The chain crosses the membrane as a helical span at residues Glu289–Ile308. Over Leu309–Ala320 the chain is Extracellular. Residues Val321–Ala338 traverse the membrane as a helical segment. Residues Thr339–Leu772 are Cytoplasmic-facing. Asp376 serves as the catalytic 4-aspartylphosphate intermediate. Residues Ser452 and Ser484 each carry the phosphoserine modification. Lys487 is an ATP binding site. Tyr542 carries the post-translational modification Phosphotyrosine. Residues Arg596–Asp717 are mediates interaction with SCN7A. Lys661 carries the post-translational modification N6-succinyllysine. 2 positions are modified to phosphoserine: Ser668 and Ser675. The Mg(2+) site is built by Asp717 and Asp721. A helical membrane pass occupies residues Lys773–Ile792. Over Phe793–Leu802 the chain is Extracellular. The chain crosses the membrane as a helical span at residues Gly803–Ala823. Over Tyr824 to Lys843 the chain is Cytoplasmic. A helical transmembrane segment spans residues Leu844–Phe866. The Extracellular segment spans residues Phe867–Cys918. A helical transmembrane segment spans residues His919–Lys938. The Cytoplasmic portion of the chain corresponds to Thr939–Asn951. At Ser943 the chain carries Phosphoserine; by PKA. A helical membrane pass occupies residues Lys952–Tyr970. Topologically, residues Cys971 to Pro985 are extracellular. Residues Thr986–Lys1006 form a helical membrane-spanning segment. At Leu1007–Tyr1023 the chain is on the cytoplasmic side.

The protein belongs to the cation transport ATPase (P-type) (TC 3.A.3) family. Type IIC subfamily. As to quaternary structure, the sodium/potassium-transporting ATPase is composed of a catalytic alpha subunit, an auxiliary non-catalytic beta subunit and an additional regulatory subunit. Interacts with regulatory subunit FXYD1. Interacts with regulatory subunit FXYD3. Interacts with SIK1. Interacts with SLC35G1 and STIM1. Interacts with CLN3; this interaction regulates the sodium/potassium-transporting ATPase complex localization at the plasma membrane. Interacts with SCN7A; activates ATP1A1 P-type sodium:potassium-exchanging transporter activity which indirectly signals to nearby neurons to regulate sodium homeostasis. Post-translationally, phosphorylation on Tyr-10 modulates pumping activity. Phosphorylation of Ser-943 by PKA modulates the response of ATP1A1 to PKC. Dephosphorylation by protein phosphatase 2A (PP2A) following increases in intracellular sodium, leading to increase catalytic activity. In terms of tissue distribution, expressed in endocardial endothelial cells.

It is found in the cell membrane. Its subcellular location is the basolateral cell membrane. It localises to the sarcolemma. The protein resides in the cell projection. The protein localises to the axon. It is found in the melanosome. It carries out the reaction K(+)(out) + Na(+)(in) + ATP + H2O = K(+)(in) + Na(+)(out) + ADP + phosphate + H(+). This is the catalytic component of the active enzyme, which catalyzes the hydrolysis of ATP coupled with the exchange of sodium and potassium ions across the plasma membrane. This action creates the electrochemical gradient of sodium and potassium ions, providing the energy for active transport of various nutrients. Could also be part of an osmosensory signaling pathway that senses body-fluid sodium levels and controls salt intake behavior as well as voluntary water intake to regulate sodium homeostasis. This is Sodium/potassium-transporting ATPase subunit alpha-1 (ATP1A1) from Oryctolagus cuniculus (Rabbit).